Consider the following 246-residue polypeptide: Probable transcriptional regulatory protein WRi_002620 (246 aa).

The segment at 1 to 22 is disordered; it reads MAGHSQFSNIKHRKGAQDAKRS.

This sequence belongs to the TACO1 family.

Its subcellular location is the cytoplasm. The polypeptide is Probable transcriptional regulatory protein WRi_002620 (Wolbachia sp. subsp. Drosophila simulans (strain wRi)).